We begin with the raw amino-acid sequence, 126 residues long: Fluoride-specific ion channel FluC (126 aa).

The next 4 membrane-spanning stretches (helical) occupy residues 4–24 (LLLVCLGGALGSGARYLTSAW), 36–56 (GTLLVNVSGSFLLAGIMTASL), 67–85 (LFLAAGVMGGFTTYSSFNY), and 101–121 (AYLLATVLGCLAAAFAATLLV). Na(+) contacts are provided by G75 and T78.

This sequence belongs to the fluoride channel Fluc/FEX (TC 1.A.43) family.

It localises to the cell inner membrane. The enzyme catalyses fluoride(in) = fluoride(out). Na(+) is not transported, but it plays an essential structural role and its presence is essential for fluoride channel function. Its function is as follows. Fluoride-specific ion channel. Important for reducing fluoride concentration in the cell, thus reducing its toxicity. This chain is Fluoride-specific ion channel FluC, found in Anaeromyxobacter dehalogenans (strain 2CP-1 / ATCC BAA-258).